A 545-amino-acid polypeptide reads, in one-letter code: T-complex protein 1 subunit gamma (545 aa).

An N-acetylmethionine modification is found at M1. A disordered region spans residues 1–24 (MMGHRPVLVLSQNTKRESGRKVQS). S11 carries the post-translational modification Phosphoserine. Residue K15 forms a Glycyl lysine isopeptide (Lys-Gly) (interchain with G-Cter in SUMO2) linkage. ADP is bound at residue G42. G42 lines the ATP pocket. D93 contributes to the Mg(2+) binding site. Residues G94, T95, T96, S97, T162, and K163 each contribute to the ADP site. ATP is bound by residues G94, T95, and T96. S170 bears the Phosphoserine mark. K222 carries the N6-acetyllysine modification. A phosphoserine mark is found at S243 and S244. Position 247 is a phosphotyrosine (Y247). Residues K248 and K249 each participate in a glycyl lysine isopeptide (Lys-Gly) (interchain with G-Cter in SUMO2) cross-link. S252 carries the phosphoserine modification. A disulfide bridge links C366 with C372. A Glycyl lysine isopeptide (Lys-Gly) (interchain with G-Cter in SUMO2) cross-link involves residue K381. Position 411 (G411) interacts with ADP. G411 is a binding site for ATP. Residues T430 and T459 each carry the phosphothreonine modification. ADP contacts are provided by G482, E483, E497, and K502. Residue G482 coordinates ATP. E497 contacts ATP. The tract at residues 526-545 (HKKKGDDQSRQGGAPDAGQE) is disordered.

It belongs to the TCP-1 chaperonin family. Component of the chaperonin-containing T-complex (TRiC), a hexadecamer composed of two identical back-to-back stacked rings enclosing a protein folding chamber. Each ring is made up of eight different subunits: TCP1/CCT1, CCT2, CCT3, CCT4, CCT5, CCT6A/CCT6, CCT7, CCT8. Interacts with PACRG. Interacts with DNAAF4. Interacts with DLEC1.

The protein resides in the cytoplasm. It catalyses the reaction ATP + H2O = ADP + phosphate + H(+). Component of the chaperonin-containing T-complex (TRiC), a molecular chaperone complex that assists the folding of actin, tubulin and other proteins upon ATP hydrolysis. The TRiC complex mediates the folding of WRAP53/TCAB1, thereby regulating telomere maintenance. As part of the TRiC complex may play a role in the assembly of BBSome, a complex involved in ciliogenesis regulating transports vesicles to the cilia. The sequence is that of T-complex protein 1 subunit gamma (CCT3) from Bos taurus (Bovine).